Reading from the N-terminus, the 436-residue chain is MKNKTRVSEYYLPLMKNVSGEVKLRSHKYSLRAGLVKQCGAGLYSWLPLGLKVLRNIESVIRQELDSMGMHEMLMPCIQLAKLWEESGRYSDYGKELLKFKDRHDNELLFGPTNEEVITAIVRDDLASYKQLPKILYHIQWKFRDEIRPRFGLMRAREFLMKDAYSFDVDQQSARISYNKVYQSYLRIFKRLGLNPIPCRANAGVIGGSLNHEFHITTTEGGEGKIFYPEEMGELVDEFCKIDPSNEHAVSVMTEKLQELFCFTEECNSSGIGNDNRICTAQGIEVGHIFLFGEKYSAPMQARFSGRDGKKKNFYMGSYGIGISRLLAAIIEVHSDDKGIIWPESIAPFKIGLINLHGESCGFAEEIFSKLDSVIYDDTADSQGVKFARMDLIGVPFQIIVGKNGPIHGTIELKYRLDSKRESRSLNELVSLFSHT.

The protein belongs to the class-II aminoacyl-tRNA synthetase family. ProS type 2 subfamily. As to quaternary structure, homodimer.

It is found in the cytoplasm. The catalysed reaction is tRNA(Pro) + L-proline + ATP = L-prolyl-tRNA(Pro) + AMP + diphosphate. Catalyzes the attachment of proline to tRNA(Pro) in a two-step reaction: proline is first activated by ATP to form Pro-AMP and then transferred to the acceptor end of tRNA(Pro). This chain is Proline--tRNA ligase, found in Neorickettsia sennetsu (strain ATCC VR-367 / Miyayama) (Ehrlichia sennetsu).